The chain runs to 283 residues: Nicotine 6-hydroxylase medium subunit (283 aa).

The 176-residue stretch at 1 to 176 (MKLPAIRYAS…TDVWIPSRPN (176 aa)) folds into the FAD-binding PCMH-type domain. FAD is bound by residues 31–35 (AGGQS) and 110–114 (TLGGS).

Heterotrimer composed of a large subunit (NdhL), a medium subunit (NdhM) and a small subunit (NdhS). FAD is required as a cofactor.

It localises to the cytoplasm. The catalysed reaction is (R)-nicotine + A + H2O = (R)-6-hydroxynicotine + AH2. The enzyme catalyses (S)-nicotine + A + H2O = (S)-6-hydroxynicotine + AH2. The protein operates within alkaloid degradation; nicotine degradation; 6-hydroxypseudooxynicotine from nicotine (R-isomer route): step 1/2. It participates in alkaloid degradation; nicotine degradation; 6-hydroxypseudooxynicotine from nicotine (S-isomer route): step 1/2. Nicotine dehydrogenase activity is inhibited by tungsten. Functionally, component of the nicotine 6-hydroxylase, which is involved in the degradation of nicotine. Catalyzes the hydroxylation of the pyridine ring at C6 to form 6-hydroxynicotine. Can use both L-nicotine and D-nicotine. The protein is Nicotine 6-hydroxylase medium subunit of Paenarthrobacter nicotinovorans (Arthrobacter nicotinovorans).